An 86-amino-acid polypeptide reads, in one-letter code: Small ribosomal subunit protein bS16 (86 aa).

The protein belongs to the bacterial ribosomal protein bS16 family.

The chain is Small ribosomal subunit protein bS16 from Xylella fastidiosa (strain 9a5c).